Reading from the N-terminus, the 603-residue chain is Proline--tRNA ligase (603 aa).

The protein belongs to the class-II aminoacyl-tRNA synthetase family. ProS type 1 subfamily. As to quaternary structure, homodimer.

It is found in the cytoplasm. The enzyme catalyses tRNA(Pro) + L-proline + ATP = L-prolyl-tRNA(Pro) + AMP + diphosphate. Functionally, catalyzes the attachment of proline to tRNA(Pro) in a two-step reaction: proline is first activated by ATP to form Pro-AMP and then transferred to the acceptor end of tRNA(Pro). As ProRS can inadvertently accommodate and process non-cognate amino acids such as alanine and cysteine, to avoid such errors it has two additional distinct editing activities against alanine. One activity is designated as 'pretransfer' editing and involves the tRNA(Pro)-independent hydrolysis of activated Ala-AMP. The other activity is designated 'posttransfer' editing and involves deacylation of mischarged Ala-tRNA(Pro). The misacylated Cys-tRNA(Pro) is not edited by ProRS. This chain is Proline--tRNA ligase, found in Synechocystis sp. (strain ATCC 27184 / PCC 6803 / Kazusa).